The primary structure comprises 359 residues: Dual-specificity RNA methyltransferase RlmN (359 aa).

E90 functions as the Proton acceptor in the catalytic mechanism. A Radical SAM core domain is found at 109–342 (HQERYTVCIS…CTIRESKGLD (234 aa)). An intrachain disulfide couples C116 to C347. C123, C127, and C130 together coordinate [4Fe-4S] cluster. S-adenosyl-L-methionine contacts are provided by residues 173–174 (GE), S205, 228–230 (SLH), and N304. C347 functions as the S-methylcysteine intermediate in the catalytic mechanism.

The protein belongs to the radical SAM superfamily. RlmN family. It depends on [4Fe-4S] cluster as a cofactor.

It localises to the cytoplasm. It carries out the reaction adenosine(2503) in 23S rRNA + 2 reduced [2Fe-2S]-[ferredoxin] + 2 S-adenosyl-L-methionine = 2-methyladenosine(2503) in 23S rRNA + 5'-deoxyadenosine + L-methionine + 2 oxidized [2Fe-2S]-[ferredoxin] + S-adenosyl-L-homocysteine. It catalyses the reaction adenosine(37) in tRNA + 2 reduced [2Fe-2S]-[ferredoxin] + 2 S-adenosyl-L-methionine = 2-methyladenosine(37) in tRNA + 5'-deoxyadenosine + L-methionine + 2 oxidized [2Fe-2S]-[ferredoxin] + S-adenosyl-L-homocysteine. Specifically methylates position 2 of adenine 2503 in 23S rRNA and position 2 of adenine 37 in tRNAs. m2A2503 modification seems to play a crucial role in the proofreading step occurring at the peptidyl transferase center and thus would serve to optimize ribosomal fidelity. This is Dual-specificity RNA methyltransferase RlmN from Sulfurovum sp. (strain NBC37-1).